An 883-amino-acid chain; its full sequence is Phosphoenolpyruvate carboxylase (883 aa).

Active-site residues include H141 and K547.

It belongs to the PEPCase type 1 family. The cofactor is Mg(2+).

The enzyme catalyses oxaloacetate + phosphate = phosphoenolpyruvate + hydrogencarbonate. Functionally, forms oxaloacetate, a four-carbon dicarboxylic acid source for the tricarboxylic acid cycle. This Chromohalobacter salexigens (strain ATCC BAA-138 / DSM 3043 / CIP 106854 / NCIMB 13768 / 1H11) protein is Phosphoenolpyruvate carboxylase.